A 507-amino-acid polypeptide reads, in one-letter code: Acetylcholine receptor subunit beta-type lev-1 (507 aa).

A signal peptide spans Met-1–Thr-31. N-linked (GlcNAc...) asparagine glycosylation is found at Asn-28, Asn-58, and Asn-109. Over Cys-32–Ser-138 the chain is Extracellular. A helical membrane pass occupies residues Phe-139–Tyr-159. Cys-163 and Cys-177 are disulfide-bonded. The next 3 membrane-spanning stretches (helical) occupy residues Val-243–Pro-263, Gly-271–Leu-291, and Leu-305–Ile-325. Residues Gly-373 to His-392 are disordered. Basic and acidic residues predominate over residues Asn-379–His-392. Residues Phe-454–Ala-474 traverse the membrane as a helical segment.

It belongs to the ligand-gated ion channel (TC 1.A.9) family. Acetylcholine receptor (TC 1.A.9.1) subfamily. Interacts with unc-29. Component of nicotinic acetylcholine receptor composed of 2 non-alpha subunits lev-1 and unc-29, and 3 alpha subunits unc-38, unc-63 and lev-8.

Its subcellular location is the postsynaptic cell membrane. The protein localises to the cell membrane. Functionally, non-alpha subunit of nicotinic acetylcholine receptor (nAChR). Involved in nAChR sensitivity to nicotine. In Caenorhabditis elegans, this protein is Acetylcholine receptor subunit beta-type lev-1 (lev-1).